The primary structure comprises 349 residues: Glycerol-3-phosphate dehydrogenase [NAD(P)+] (349 aa).

3 residues coordinate NADPH: Ser-12, Trp-13, and Lys-107. Sn-glycerol 3-phosphate is bound by residues Lys-107, Gly-138, and Ser-140. Ala-142 serves as a coordination point for NADPH. Positions 193, 246, 256, 257, and 258 each coordinate sn-glycerol 3-phosphate. Lys-193 functions as the Proton acceptor in the catalytic mechanism. Arg-257 provides a ligand contact to NADPH. The NADPH site is built by Val-281 and Glu-283.

The protein belongs to the NAD-dependent glycerol-3-phosphate dehydrogenase family.

It is found in the cytoplasm. It carries out the reaction sn-glycerol 3-phosphate + NAD(+) = dihydroxyacetone phosphate + NADH + H(+). The catalysed reaction is sn-glycerol 3-phosphate + NADP(+) = dihydroxyacetone phosphate + NADPH + H(+). It functions in the pathway membrane lipid metabolism; glycerophospholipid metabolism. Catalyzes the reduction of the glycolytic intermediate dihydroxyacetone phosphate (DHAP) to sn-glycerol 3-phosphate (G3P), the key precursor for phospholipid synthesis. The sequence is that of Glycerol-3-phosphate dehydrogenase [NAD(P)+] from Pelotomaculum thermopropionicum (strain DSM 13744 / JCM 10971 / SI).